A 239-amino-acid chain; its full sequence is Tryptophan synthase alpha chain (239 aa).

Catalysis depends on proton acceptor residues E34 and D45.

It belongs to the TrpA family. As to quaternary structure, tetramer of two alpha and two beta chains.

It catalyses the reaction (1S,2R)-1-C-(indol-3-yl)glycerol 3-phosphate + L-serine = D-glyceraldehyde 3-phosphate + L-tryptophan + H2O. Its pathway is amino-acid biosynthesis; L-tryptophan biosynthesis; L-tryptophan from chorismate: step 5/5. The alpha subunit is responsible for the aldol cleavage of indoleglycerol phosphate to indole and glyceraldehyde 3-phosphate. In Thermotoga petrophila (strain ATCC BAA-488 / DSM 13995 / JCM 10881 / RKU-1), this protein is Tryptophan synthase alpha chain.